The primary structure comprises 705 residues: MWLLYLLVPAMFCRAGGSIPIPQKLFGEVTSPLFPKPYPNNFETTTVITVPTGYRVKLVFQQFDLEPSEGCFYDYVKISADKKSLGRFCGQLGSPLGNPPGKKEFMSQGNKMLLTFHTDFSNEENGTIMFYKGFLAYYQAVDLDECASQSKSGEEDPQPQCQHLCHNYVGGYFCSCLPGYELQKDRHSCQAECSSELYTEASGYISSLEYPRSYPPDLRCNYSIRVERGLTLHLKFLEPFEIDDHQQVHCPYDQLQIYANGKNIGEFCGKQRPPDLDTSSNAVDLLFFTDESGDSRGWNLRYTTEIIKCPQPKTLDEFTIIQNLQPQYQFRDYFIATCKQGYQLIEGNQVLHSFTAVCQDDGTWHRAMPRCKIKDCGQPRNLPNGAFRYTTTMGVNTYKARIQYYCHKPYYKMQTRAGSRESEQGVYTCTAQGIWKNEQKGEKIPRCLPVCGKPVNPVEQRQRIIGGQKAKMGNFPWQVFTNIHGRGGGALLGDRWILTAAHTLYPKEHEAQTNASLDVFLGHTNVEELMKLGNHPIRRVSVHPDYRQDESHNFEGDIALLELENSVTLGPNLLPICLPDNETFYDLGLMGYVSGFGVMEEKIAHDLRFVRLPVANPQACETWLRGKNRMDVFSQNMFCAGHPSLKQDACQGDSGGVFAVRDPNTDRWVATGIVSWGIGCSRGYGFYTKVLNYVDWIKKEMEEED.

The signal sequence occupies residues methionine 1–glycine 17. Residues serine 18–valine 141 form the CUB 1 domain. Positions 66, 74, and 119 each coordinate Ca(2+). Cysteine 71 and cysteine 89 are joined by a disulfide. Residue asparagine 125 is glycosylated (N-linked (GlcNAc...) asparagine). Ca(2+) is bound by residues aspartate 142, leucine 143, and glutamate 145. The EGF-like; calcium-binding domain maps to aspartate 142–glutamine 190. 4 cysteine pairs are disulfide-bonded: cysteine 146–cysteine 165, cysteine 161–cysteine 174, cysteine 176–cysteine 189, and cysteine 193–cysteine 220. Asparagine 167, tyrosine 168, and glycine 171 together coordinate Ca(2+). Asparagine 167 is subject to (3R)-3-hydroxyasparagine. The 113-residue stretch at cysteine 193–glutamate 305 folds into the CUB 2 domain. Serine 206 carries the post-translational modification Phosphoserine; by CK2. N-linked (GlcNAc...) asparagine glycosylation is present at asparagine 221. Ca(2+) contacts are provided by aspartate 243, aspartate 253, aspartate 290, and aspartate 294. A disulfide bridge connects residues cysteine 250 and cysteine 268. Sushi domains are found at residues isoleucine 307 to isoleucine 373 and lysine 374 to proline 449. 5 disulfides stabilise this stretch: cysteine 309-cysteine 358, cysteine 338-cysteine 371, cysteine 376-cysteine 429, cysteine 406-cysteine 447, and cysteine 451-cysteine 577. The 239-residue stretch at isoleucine 464–glutamate 702 folds into the Peptidase S1 domain. Histidine 502 functions as the Charge relay system in the catalytic mechanism. N-linked (GlcNAc...) asparagine glycosylation occurs at asparagine 514. Residue aspartate 557 is the Charge relay system of the active site. The N-linked (GlcNAc...) asparagine glycan is linked to asparagine 581. Disulfide bonds link cysteine 620/cysteine 639 and cysteine 650/cysteine 680. The active-site Charge relay system is the serine 654.

This sequence belongs to the peptidase S1 family. Core component of the complement C1 complex, a calcium-dependent complex composed of 1 molecule of the C1Q subcomplex, 2 molecules of C1R and 2 molecules of C1S. The C1Q subcomplex is composed 18 subunits: 3 chains of C1QA, C1QB, and C1QC trimerize to form 6 collagen-like triple helices connected to six globular ligand-recognition modules. Within the C1 complex, C1R is a dimer of identical chains, each of which is activated by cleavage into two chains, heavy and light, connected by disulfide bonds. In terms of processing, cleaved and activated by autocatalytic processing to generate Complement C1r subcomponent heavy and light chains that are connected by disulfide bonds. The iron and 2-oxoglutarate dependent 3-hydroxylation of aspartate and asparagine is (R) stereospecific within EGF domains.

Its subcellular location is the secreted. It is found in the cell surface. The enzyme catalyses Selective cleavage of Lys(or Arg)-|-Ile bond in complement subcomponent C1s to form the active form of C1s (EC 3.4.21.42).. With respect to regulation, activated by the C1Q subcomplex of the C1 complex following C1Q binding to immunoglobulins (IgG or IgM) complexed with antigens to form antigen-antibody complexes on the surface of pathogens. Immunoglobulin-binding promotes autoactivation of C1R, which results in the cleavage of the Arg-Ile bond in the catalytic domain. Its function is as follows. Serine protease component of the complement C1 complex, a multiprotein complex that initiates the classical pathway of the complement system, a cascade of proteins that leads to phagocytosis and breakdown of pathogens and signaling that strengthens the adaptive immune system. C1R catalyzes the first enzymatic step in the classical complement pathway: it is activated by the C1Q subcomplex of the C1 complex, which associates with IgG or IgM immunoglobulins complexed with antigens to form antigen-antibody complexes on the surface of pathogens. Immunoglobulin-binding promotes the autocatalytic cleavage and activation of C1R. Activated C1R then cleaves and activates C1S, the second protease of the classical complement pathway. It is unclear if C1R activates C1S within single, strained C1 complexes or between neighboring C1 complexes on surfaces. The chain is Complement C1r subcomponent (C1R) from Pongo abelii (Sumatran orangutan).